Reading from the N-terminus, the 414-residue chain is Eukaryotic initiation factor 4A-3 (414 aa).

Alanine 2 is subject to N-acetylalanine. Residues 41 to 69 carry the Q motif motif; it reads DSFDAMELQPDLLRGIYAYGFEKPSAIQQ. One can recognise a Helicase ATP-binding domain in the interval 72–242; that stretch reads IIPFCKGLDV…RKFMNKPVRI (171 aa). Residue 85-92 coordinates ATP; the sequence is AQSGTGKT. At serine 106 the chain carries Phosphoserine. The residue at position 147 (threonine 147) is a Phosphothreonine. The DEAD box motif lies at 190-193; that stretch reads DEAD. The Helicase C-terminal domain maps to 253–414; sequence GIKQFYVNVD…ELPSNVADLL (162 aa).

The protein belongs to the DEAD box helicase family. eIF4A subfamily. In terms of assembly, eIF4F is a multi-subunit complex, the composition of which varies with external and internal environmental conditions. It is composed of at least EIF4A, EIF4E and EIF4G.

It is found in the cytoplasm. The enzyme catalyses ATP + H2O = ADP + phosphate + H(+). In terms of biological role, ATP-dependent RNA helicase which is a subunit of the eIF4F complex involved in cap recognition and is required for mRNA binding to ribosome. In the current model of translation initiation, eIF4A unwinds RNA secondary structures in the 5'-UTR of mRNAs which is necessary to allow efficient binding of the small ribosomal subunit, and subsequent scanning for the initiator codon. The chain is Eukaryotic initiation factor 4A-3 (TIF4A-3) from Arabidopsis thaliana (Mouse-ear cress).